A 59-amino-acid polypeptide reads, in one-letter code: Ferredoxin (59 aa).

Residues Lys-2–Asp-29 form the 4Fe-4S ferredoxin-type domain. The [4Fe-4S] cluster site is built by Cys-10, Cys-13, and Cys-16. An intrachain disulfide couples Cys-20 to Cys-43. Position 51 (Cys-51) interacts with [4Fe-4S] cluster.

Requires [4Fe-4S] cluster as cofactor. [3Fe-4S] cluster is required as a cofactor.

Ferredoxins are iron-sulfur proteins that transfer electrons in a wide variety of metabolic reactions. The chain is Ferredoxin from Thermococcus litoralis.